Here is a 112-residue protein sequence, read N- to C-terminus: UPF0342 protein SSU05_1260 (112 aa).

This sequence belongs to the UPF0342 family.

The protein is UPF0342 protein SSU05_1260 of Streptococcus suis (strain 05ZYH33).